The sequence spans 414 residues: CCA-adding enzyme (414 aa).

ATP is bound by residues Gly8 and Arg11. Residues Gly8 and Arg11 each coordinate CTP. Residues Asp21 and Asp23 each coordinate Mg(2+). ATP contacts are provided by Arg91, Arg137, and Arg140. Arg91, Arg137, and Arg140 together coordinate CTP.

The protein belongs to the tRNA nucleotidyltransferase/poly(A) polymerase family. Bacterial CCA-adding enzyme type 2 subfamily. Mg(2+) serves as cofactor.

The enzyme catalyses a tRNA precursor + 2 CTP + ATP = a tRNA with a 3' CCA end + 3 diphosphate. It carries out the reaction a tRNA with a 3' CCA end + 2 CTP + ATP = a tRNA with a 3' CCACCA end + 3 diphosphate. Its function is as follows. Catalyzes the addition and repair of the essential 3'-terminal CCA sequence in tRNAs without using a nucleic acid template. Adds these three nucleotides in the order of C, C, and A to the tRNA nucleotide-73, using CTP and ATP as substrates and producing inorganic pyrophosphate. tRNA 3'-terminal CCA addition is required both for tRNA processing and repair. Also involved in tRNA surveillance by mediating tandem CCA addition to generate a CCACCA at the 3' terminus of unstable tRNAs. While stable tRNAs receive only 3'-terminal CCA, unstable tRNAs are marked with CCACCA and rapidly degraded. This Buchnera aphidicola subsp. Acyrthosiphon pisum (strain 5A) protein is CCA-adding enzyme.